A 627-amino-acid chain; its full sequence is Ras and EF-hand domain-containing protein homolog (627 aa).

The stretch at 55-245 (YERVIRNFLR…RKLHDSNDGL (191 aa)) forms a coiled coil. Residues Ser-266 and Ser-272 each carry the phosphoserine modification. GTP is bound by residues 438-443 (AVGKSS), 541-544 (NKAD), and 578-579 (AK).

This sequence belongs to the small GTPase superfamily. Rab family. In terms of assembly, homodimer. Interacts with the dynein-dynactin complex.

It localises to the cytoplasm. Its subcellular location is the perinuclear region. Functionally, binds predominantly GDP, and also GTP. Acts as a dynein adapter protein that activates dynein-mediated transport and dynein-dynactin motility on microtubules. The polypeptide is Ras and EF-hand domain-containing protein homolog (Rasef) (Mus musculus (Mouse)).